The primary structure comprises 160 residues: Transcription elongation factor GreA (160 aa).

Residues 1–72 (MAEKTYVMTL…QIQILETKIR (72 aa)) are a coiled coil.

It belongs to the GreA/GreB family.

Its function is as follows. Necessary for efficient RNA polymerase transcription elongation past template-encoded arresting sites. The arresting sites in DNA have the property of trapping a certain fraction of elongating RNA polymerases that pass through, resulting in locked ternary complexes. Cleavage of the nascent transcript by cleavage factors such as GreA or GreB allows the resumption of elongation from the new 3'terminus. GreA releases sequences of 2 to 3 nucleotides. This Streptococcus thermophilus (strain ATCC BAA-491 / LMD-9) protein is Transcription elongation factor GreA.